The primary structure comprises 294 residues: Cytidine deaminase (294 aa).

CMP/dCMP-type deaminase domains are found at residues 48 to 168 and 186 to 294; these read DEDA…FGPK and LTGD…VLLG. Residue 89 to 91 coordinates substrate; that stretch reads NME. Histidine 102 contributes to the Zn(2+) binding site. Residue glutamate 104 is the Proton donor of the active site. Residues cysteine 129 and cysteine 132 each contribute to the Zn(2+) site.

It belongs to the cytidine and deoxycytidylate deaminase family. In terms of assembly, homodimer. Zn(2+) is required as a cofactor.

The enzyme catalyses cytidine + H2O + H(+) = uridine + NH4(+). The catalysed reaction is 2'-deoxycytidine + H2O + H(+) = 2'-deoxyuridine + NH4(+). In terms of biological role, this enzyme scavenges exogenous and endogenous cytidine and 2'-deoxycytidine for UMP synthesis. This chain is Cytidine deaminase, found in Salmonella enteritidis PT4 (strain P125109).